The primary structure comprises 227 residues: PKHD-type hydroxylase BamMC406_4714 (227 aa).

The Fe2OG dioxygenase domain maps to 78 to 178 (KVFPPLFNRY…RVASFFWIQS (101 aa)). The Fe cation site is built by His-96, Asp-98, and His-159. Arg-169 serves as a coordination point for 2-oxoglutarate.

Fe(2+) serves as cofactor. It depends on L-ascorbate as a cofactor.

In Burkholderia ambifaria (strain MC40-6), this protein is PKHD-type hydroxylase BamMC406_4714.